Consider the following 290-residue polypeptide: 4-hydroxybenzoate octaprenyltransferase (290 aa).

The next 8 membrane-spanning stretches (helical) occupy residues 23–43 (IGALLLLWPTLWALWVATPGM), 46–66 (LWILAVFVAGVWLMRAAGCVV), 99–119 (LFVVLVLLAFLLVLTLNAMTI), 141–161 (LPQVVLGAAFGWSIPMAFAAV), 163–183 (ESLPLSCWLMFLANILWAVAY), 212–232 (TLIIGILQLGVMALMALIGWL), 233–253 (NGLGWGYYWAVLVAGALFVYQ), and 268–288 (AFMNNNYVGLVLFLGLAMSYW).

The protein belongs to the UbiA prenyltransferase family. Requires Mg(2+) as cofactor.

Its subcellular location is the cell inner membrane. The catalysed reaction is all-trans-octaprenyl diphosphate + 4-hydroxybenzoate = 4-hydroxy-3-(all-trans-octaprenyl)benzoate + diphosphate. Its pathway is cofactor biosynthesis; ubiquinone biosynthesis. Functionally, catalyzes the prenylation of para-hydroxybenzoate (PHB) with an all-trans polyprenyl group. Mediates the second step in the final reaction sequence of ubiquinone-8 (UQ-8) biosynthesis, which is the condensation of the polyisoprenoid side chain with PHB, generating the first membrane-bound Q intermediate 3-octaprenyl-4-hydroxybenzoate. The sequence is that of 4-hydroxybenzoate octaprenyltransferase from Salmonella typhi.